A 299-amino-acid polypeptide reads, in one-letter code: Tyrosine recombinase XerC (299 aa).

The 81-residue stretch at 1-81 folds into the Core-binding (CB) domain; the sequence is MDEAIRRFIE…SWRQFYHWLQ (81 aa). In terms of domain architecture, Tyr recombinase spans 102-281; the sequence is LLPKALPVDG…DFQHLAKVYD (180 aa). Active-site residues include Arg-142, Lys-166, His-233, Arg-236, and His-259. Tyr-268 (O-(3'-phospho-DNA)-tyrosine intermediate) is an active-site residue.

It belongs to the 'phage' integrase family. XerC subfamily. In terms of assembly, forms a cyclic heterotetrameric complex composed of two molecules of XerC and two molecules of XerD.

It is found in the cytoplasm. Functionally, site-specific tyrosine recombinase, which acts by catalyzing the cutting and rejoining of the recombining DNA molecules. The XerC-XerD complex is essential to convert dimers of the bacterial chromosome into monomers to permit their segregation at cell division. It also contributes to the segregational stability of plasmids. This is Tyrosine recombinase XerC from Chromobacterium violaceum (strain ATCC 12472 / DSM 30191 / JCM 1249 / CCUG 213 / NBRC 12614 / NCIMB 9131 / NCTC 9757 / MK).